The chain runs to 449 residues: Tubulin alpha-2B chain (449 aa).

A GTP-binding site is contributed by Gln-11. Position 40 is an N6-acetyllysine (Lys-40). 7 residues coordinate GTP: Glu-71, Ser-140, Gly-144, Thr-145, Thr-179, Asn-206, and Asn-228. Glu-71 contributes to the Mg(2+) binding site. Glu-254 is a catalytic residue.

Belongs to the tubulin family. As to quaternary structure, dimer of alpha and beta chains. A typical microtubule is a hollow water-filled tube with an outer diameter of 25 nm and an inner diameter of 15 nM. Alpha-beta heterodimers associate head-to-tail to form protofilaments running lengthwise along the microtubule wall with the beta-tubulin subunit facing the microtubule plus end conferring a structural polarity. Microtubules usually have 13 protofilaments but different protofilament numbers can be found in some organisms and specialized cells. It depends on Mg(2+) as a cofactor. Acetylation of alpha chains at Lys-40 stabilizes microtubules and affects affinity and processivity of microtubule motors. This modification has a role in multiple cellular functions, ranging from cell motility, cell cycle progression or cell differentiation to intracellular trafficking and signaling.

The protein localises to the cytoplasm. It is found in the cytoskeleton. The protein resides in the spindle. It localises to the nucleus. It catalyses the reaction GTP + H2O = GDP + phosphate + H(+). In terms of biological role, tubulin is the major constituent of microtubules, a cylinder consisting of laterally associated linear protofilaments composed of alpha- and beta-tubulin heterodimers. Microtubules grow by the addition of GTP-tubulin dimers to the microtubule end, where a stabilizing cap forms. Below the cap, tubulin dimers are in GDP-bound state, owing to GTPase activity of alpha-tubulin. The chain is Tubulin alpha-2B chain (ALTBE) from Physarum polycephalum (Slime mold).